The primary structure comprises 506 residues: MAP kinase kinase MKK2/SSP33 (506 aa).

The tract at residues 1–69 (MASMFRPPES…TSTTSSMASN (69 aa)) is disordered. Residues 26–52 (LVQNAKSTNDGQHLNRSPYSSVNESPY) show a composition bias toward polar residues. The segment covering 53–69 (SNNSTSATSTTSSMASN) has biased composition (low complexity). One can recognise a Protein kinase domain in the interval 214 to 481 (ITTLGILGEG…PRQMLKHPWI (268 aa)). Residues 220–228 (LGEGAGGSV) and lysine 243 each bind ATP. Aspartate 342 acts as the Proton acceptor in catalysis.

The protein belongs to the protein kinase superfamily. STE Ser/Thr protein kinase family. MAP kinase kinase subfamily.

It catalyses the reaction L-seryl-[protein] + ATP = O-phospho-L-seryl-[protein] + ADP + H(+). It carries out the reaction L-threonyl-[protein] + ATP = O-phospho-L-threonyl-[protein] + ADP + H(+). The enzyme catalyses L-tyrosyl-[protein] + ATP = O-phospho-L-tyrosyl-[protein] + ADP + H(+). Functionally, serine/threonine protein kinase involved in a signal transduction pathway that plays a role in yeast cell morphogenesis and cell growth. This pathway seems to start by SMP3; then involves the kinase PKC1 that may act on the BCK1 kinase that then phosphorylates MKK1 and MKK2 which themselves phosphorylate the MPK1 kinase. The protein is MAP kinase kinase MKK2/SSP33 (MKK2) of Saccharomyces cerevisiae (strain ATCC 204508 / S288c) (Baker's yeast).